A 226-amino-acid polypeptide reads, in one-letter code: MSAFVLGSTGLVGLQILKVLDSSTAFKKVSTVSRRLPSVTSGKINSIEKKESEEWPAIIEKEAKDYSAFFSAFGTTRAAAGSADNFKKIDYGINYEAAKAAKAAGVETFVLVSTIGANAQSSFLYLQVKGQLEEDIIALKFPRTIILRPGILLGERETSKGLLNNLSVGVLKYLHGTPLTFLGNPIFGAEVAQIAVNAAQESFEKGDEPVVKFYEARELTELYKKL.

The transit peptide at 1–43 (MSAFVLGSTGLVGLQILKVLDSSTAFKKVSTVSRRLPSVTSGK) directs the protein to the mitochondrion.

Belongs to the FMP52 family.

It localises to the mitochondrion outer membrane. The polypeptide is Protein FMP52-1, mitochondrial (FMP521) (Scheffersomyces stipitis (strain ATCC 58785 / CBS 6054 / NBRC 10063 / NRRL Y-11545) (Yeast)).